A 552-amino-acid chain; its full sequence is Small ribosomal subunit protein bS1 (552 aa).

S1 motif domains follow at residues threonine 31–glutamine 101, asparagine 116–lysine 179, threonine 200–lysine 268, glycine 285–lysine 355, glycine 372–lysine 440, and aspartate 457–histidine 521.

Belongs to the bacterial ribosomal protein bS1 family.

Its function is as follows. Binds mRNA; thus facilitating recognition of the initiation point. It is needed to translate mRNA with a short Shine-Dalgarno (SD) purine-rich sequence. The protein is Small ribosomal subunit protein bS1 (rpsA) of Helicobacter pylori (strain J99 / ATCC 700824) (Campylobacter pylori J99).